A 280-amino-acid chain; its full sequence is Lipase chaperone (280 aa).

Residues 5-22 form a helical membrane-spanning segment; it reads ALTIITIASGSLGAVYFL.

It belongs to the lipase chaperone family.

Its subcellular location is the cell inner membrane. Functionally, may be involved in the folding of the extracellular lipase during its passage through the periplasm. The protein is Lipase chaperone (lifO) of Vibrio vulnificus (strain YJ016).